Here is a 501-residue protein sequence, read N- to C-terminus: Phytoene desaturase (lycopene-forming) (501 aa).

FAD is bound at residue 12 to 45 (IVIGAGFGGLALAIRLQSAGIATTLVEARDKPGG).

This sequence belongs to the carotenoid/retinoid oxidoreductase family. The cofactor is FAD.

The enzyme catalyses 15-cis-phytoene + 4 A = all-trans-lycopene + 4 AH2. It functions in the pathway carotenoid biosynthesis; astaxanthin biosynthesis. Its function is as follows. This enzyme converts phytoene into lycopene via the intermediaries of phytofluene, zeta-carotene and neurosporene by the introduction of four double bonds. The sequence is that of Phytoene desaturase (lycopene-forming) (crtI) from Paracoccus sp. (strain N81106 / MBIC 01143) (Agrobacterium aurantiacum).